The primary structure comprises 145 residues: uncharacterized protein (145 aa).

It belongs to the asfivirus K145R family.

The protein resides in the virion. This is an uncharacterized protein from Ornithodoros (relapsing fever ticks).